Here is an 861-residue protein sequence, read N- to C-terminus: DNA mismatch repair protein MutS (861 aa).

616 to 623 (GPNMGGKS) is an ATP binding site.

It belongs to the DNA mismatch repair MutS family.

Functionally, this protein is involved in the repair of mismatches in DNA. It is possible that it carries out the mismatch recognition step. This protein has a weak ATPase activity. This chain is DNA mismatch repair protein MutS, found in Haemophilus influenzae (strain 86-028NP).